We begin with the raw amino-acid sequence, 311 residues long: Malate dehydrogenase (311 aa).

Residues 7-13 (GAAGGIG) and Asp-34 each bind NAD(+). Substrate contacts are provided by Arg-81 and Arg-87. NAD(+)-binding positions include Asn-94 and 117-119 (ITN). Asn-119 and Arg-153 together coordinate substrate. The Proton acceptor role is filled by His-177. Met-227 contributes to the NAD(+) binding site.

The protein belongs to the LDH/MDH superfamily. MDH type 1 family. Homodimer.

It carries out the reaction (S)-malate + NAD(+) = oxaloacetate + NADH + H(+). Catalyzes the reversible oxidation of malate to oxaloacetate. The chain is Malate dehydrogenase from Shewanella frigidimarina (strain NCIMB 400).